Reading from the N-terminus, the 451-residue chain is UPF0761 membrane protein Hhal_0704 (451 aa).

The next 6 helical transmembrane spans lie at L66 to F86, E122 to I142, F162 to S182, L204 to V224, S228 to A248, and A268 to I288.

The protein belongs to the UPF0761 family.

It is found in the cell inner membrane. This Halorhodospira halophila (strain DSM 244 / SL1) (Ectothiorhodospira halophila (strain DSM 244 / SL1)) protein is UPF0761 membrane protein Hhal_0704.